A 146-amino-acid chain; its full sequence is UPF0306 protein HD_1359 (146 aa).

The protein belongs to the UPF0306 family.

The polypeptide is UPF0306 protein HD_1359 (Haemophilus ducreyi (strain 35000HP / ATCC 700724)).